The chain runs to 250 residues: Cell division protein ZapD (250 aa).

The protein belongs to the ZapD family. Interacts with FtsZ.

It localises to the cytoplasm. In terms of biological role, cell division factor that enhances FtsZ-ring assembly. Directly interacts with FtsZ and promotes bundling of FtsZ protofilaments, with a reduction in FtsZ GTPase activity. This chain is Cell division protein ZapD, found in Pectobacterium carotovorum subsp. carotovorum (strain PC1).